The chain runs to 280 residues: uncharacterized protein (280 aa).

This is an uncharacterized protein from Aedes vexans (Inland floodwater mosquito).